Consider the following 137-residue polypeptide: Large ribosomal subunit protein uL24 (137 aa).

This sequence belongs to the universal ribosomal protein uL24 family. In terms of assembly, part of the 50S ribosomal subunit.

In terms of biological role, one of two assembly initiator proteins, it binds directly to the 5'-end of the 23S rRNA, where it nucleates assembly of the 50S subunit. Its function is as follows. Located at the polypeptide exit tunnel on the outside of the subunit. In Sulfurisphaera tokodaii (strain DSM 16993 / JCM 10545 / NBRC 100140 / 7) (Sulfolobus tokodaii), this protein is Large ribosomal subunit protein uL24.